We begin with the raw amino-acid sequence, 284 residues long: uncharacterized protein (284 aa).

Residues 236–284 form a disordered region; that stretch reads IDITNEADSSEIIDSEPSNKDETEKPSAQETDPFDGKPVDIKDDELPFD. 2 stretches are compositionally biased toward basic and acidic residues: residues 252–262 and 269–284; these read PSNKDETEKPS and FDGKPVDIKDDELPFD.

This is an uncharacterized protein from Bacillus subtilis (strain 168).